Reading from the N-terminus, the 348-residue chain is tRNA pseudouridine synthase B (348 aa).

Residue Asp52 is the Nucleophile of the active site.

The protein belongs to the pseudouridine synthase TruB family. Type 1 subfamily.

The catalysed reaction is uridine(55) in tRNA = pseudouridine(55) in tRNA. Its function is as follows. Responsible for synthesis of pseudouridine from uracil-55 in the psi GC loop of transfer RNAs. The sequence is that of tRNA pseudouridine synthase B from Rhodopirellula baltica (strain DSM 10527 / NCIMB 13988 / SH1).